A 304-amino-acid polypeptide reads, in one-letter code: Coenzyme PQQ synthesis protein B (304 aa).

The protein belongs to the PqqB family.

Its pathway is cofactor biosynthesis; pyrroloquinoline quinone biosynthesis. Functionally, may be involved in the transport of PQQ or its precursor to the periplasm. This is Coenzyme PQQ synthesis protein B from Stutzerimonas stutzeri (Pseudomonas stutzeri).